A 93-amino-acid polypeptide reads, in one-letter code: Sec-independent protein translocase protein TatA (93 aa).

The helical transmembrane segment at 1–21 (MGIFDWKHWIVILVVVVLVFG) threads the bilayer. A disordered region spans residues 43–93 (MNDDEKPAEPVVPPAAQPVPPVQPQQSAPLNQPHTIDVQAQKVEEPTRKDS). Residues 52–65 (PVVPPAAQPVPPVQ) are compositionally biased toward pro residues. Over residues 84–93 (KVEEPTRKDS) the composition is skewed to basic and acidic residues.

It belongs to the TatA/E family. The Tat system comprises two distinct complexes: a TatABC complex, containing multiple copies of TatA, TatB and TatC subunits, and a separate TatA complex, containing only TatA subunits. Substrates initially bind to the TatABC complex, which probably triggers association of the separate TatA complex to form the active translocon.

Its subcellular location is the cell inner membrane. In terms of biological role, part of the twin-arginine translocation (Tat) system that transports large folded proteins containing a characteristic twin-arginine motif in their signal peptide across membranes. TatA could form the protein-conducting channel of the Tat system. This Pseudomonas fluorescens (strain ATCC BAA-477 / NRRL B-23932 / Pf-5) protein is Sec-independent protein translocase protein TatA.